Consider the following 196-residue polypeptide: ATP-dependent Clp protease proteolytic subunit (196 aa).

Residue Ser-98 is the Nucleophile of the active site. His-123 is a catalytic residue.

This sequence belongs to the peptidase S14 family. In terms of assembly, fourteen ClpP subunits assemble into 2 heptameric rings which stack back to back to give a disk-like structure with a central cavity, resembling the structure of eukaryotic proteasomes.

Its subcellular location is the cytoplasm. The catalysed reaction is Hydrolysis of proteins to small peptides in the presence of ATP and magnesium. alpha-casein is the usual test substrate. In the absence of ATP, only oligopeptides shorter than five residues are hydrolyzed (such as succinyl-Leu-Tyr-|-NHMec, and Leu-Tyr-Leu-|-Tyr-Trp, in which cleavage of the -Tyr-|-Leu- and -Tyr-|-Trp bonds also occurs).. In terms of biological role, cleaves peptides in various proteins in a process that requires ATP hydrolysis. Has a chymotrypsin-like activity. Plays a major role in the degradation of misfolded proteins. This is ATP-dependent Clp protease proteolytic subunit from Actinobacillus pleuropneumoniae serotype 5b (strain L20).